We begin with the raw amino-acid sequence, 479 residues long: Ribosomal RNA small subunit methyltransferase F (479 aa).

Residues 125 to 131 (AAAPGSK), E149, D176, and D194 each bind S-adenosyl-L-methionine. The Nucleophile role is filled by C247.

It belongs to the class I-like SAM-binding methyltransferase superfamily. RsmB/NOP family.

The protein localises to the cytoplasm. The catalysed reaction is cytidine(1407) in 16S rRNA + S-adenosyl-L-methionine = 5-methylcytidine(1407) in 16S rRNA + S-adenosyl-L-homocysteine + H(+). Functionally, specifically methylates the cytosine at position 1407 (m5C1407) of 16S rRNA. This Escherichia coli (strain UTI89 / UPEC) protein is Ribosomal RNA small subunit methyltransferase F.